Reading from the N-terminus, the 427-residue chain is Aspartate aminotransferase, mitochondrial (427 aa).

The N-terminal 26 residues, Met-1–Ala-26, are a transit peptide targeting the mitochondrion. Substrate is bound by residues Gly-62, Trp-159, and Asn-212. Lys-276 carries the post-translational modification N6-(pyridoxal phosphate)lysine. Arg-404 lines the substrate pocket.

The protein belongs to the class-I pyridoxal-phosphate-dependent aminotransferase family. Homodimer. Pyridoxal 5'-phosphate serves as cofactor.

The protein resides in the mitochondrion matrix. It carries out the reaction L-aspartate + 2-oxoglutarate = oxaloacetate + L-glutamate. It catalyses the reaction L-kynurenine + 2-oxoglutarate = kynurenate + L-glutamate + H2O. In terms of biological role, catalyzes the irreversible transamination of the L-tryptophan metabolite L-kynurenine to form kynurenic acid (KA). As a member of the malate-aspartate shuttle, it has a key role in the intracellular NAD(H) redox balance. Is important for metabolite exchange between mitochondria and cytosol, and for amino acid metabolism. The polypeptide is Aspartate aminotransferase, mitochondrial (got2) (Xenopus tropicalis (Western clawed frog)).